We begin with the raw amino-acid sequence, 284 residues long: Ribose-5-phosphate isomerase (284 aa).

Belongs to the ribose 5-phosphate isomerase family.

The protein localises to the cytoplasm. It catalyses the reaction aldehydo-D-ribose 5-phosphate = D-ribulose 5-phosphate. Its pathway is carbohydrate degradation; pentose phosphate pathway; D-ribose 5-phosphate from D-ribulose 5-phosphate (non-oxidative stage): step 1/1. The protein is Ribose-5-phosphate isomerase (RKI1) of Lodderomyces elongisporus (strain ATCC 11503 / CBS 2605 / JCM 1781 / NBRC 1676 / NRRL YB-4239) (Yeast).